We begin with the raw amino-acid sequence, 210 residues long: Somatotropin-1 (210 aa).

The first 22 residues, 1-22 (MARALVLLSVVLVSLLVNQGRA), serve as a signal peptide directing secretion. A Zn(2+)-binding site is contributed by His38. A disulfide bridge links Cys71 with Cys183. Residue Glu192 participates in Zn(2+) binding. A disulfide bridge connects residues Cys200 and Cys208.

The protein belongs to the somatotropin/prolactin family.

It localises to the secreted. Growth hormone plays an important role in growth control and is involved in the regulation of several anabolic processes. Implicated as an osmoregulatory substance important for seawater adaptation. This Carassius auratus (Goldfish) protein is Somatotropin-1 (gh1).